Consider the following 389-residue polypeptide: Succinate--CoA ligase [ADP-forming] subunit beta (389 aa).

The ATP-grasp domain maps to 9 to 236 (KELFAKHEVP…KDATDPLELK (228 aa)). ATP is bound by residues lysine 45, 52–54 (GRG), serine 94, and glutamate 99. Mg(2+) contacts are provided by asparagine 191 and aspartate 205. Residues asparagine 256 and 318–320 (GIT) contribute to the substrate site.

Belongs to the succinate/malate CoA ligase beta subunit family. As to quaternary structure, heterotetramer of two alpha and two beta subunits. Mg(2+) is required as a cofactor.

It carries out the reaction succinate + ATP + CoA = succinyl-CoA + ADP + phosphate. The enzyme catalyses GTP + succinate + CoA = succinyl-CoA + GDP + phosphate. It participates in carbohydrate metabolism; tricarboxylic acid cycle; succinate from succinyl-CoA (ligase route): step 1/1. Its function is as follows. Succinyl-CoA synthetase functions in the citric acid cycle (TCA), coupling the hydrolysis of succinyl-CoA to the synthesis of either ATP or GTP and thus represents the only step of substrate-level phosphorylation in the TCA. The beta subunit provides nucleotide specificity of the enzyme and binds the substrate succinate, while the binding sites for coenzyme A and phosphate are found in the alpha subunit. This is Succinate--CoA ligase [ADP-forming] subunit beta from Rhodococcus jostii (strain RHA1).